A 56-amino-acid chain; its full sequence is UPF0434 protein CBUD_1597.1 (56 aa).

It belongs to the UPF0434 family.

The protein is UPF0434 protein CBUD_1597.1 of Coxiella burnetii (strain Dugway 5J108-111).